The following is a 483-amino-acid chain: Altronate oxidoreductase (483 aa).

Position 18–29 (18–29) interacts with NAD(+); sequence IIQFGEGNFLRA.

It belongs to the mannitol dehydrogenase family. UxaB subfamily.

The catalysed reaction is D-altronate + NAD(+) = keto-D-tagaturonate + NADH + H(+). It participates in carbohydrate metabolism; pentose and glucuronate interconversion. The chain is Altronate oxidoreductase from Escherichia coli O6:K15:H31 (strain 536 / UPEC).